Reading from the N-terminus, the 278-residue chain is Phosphatidylglycerol--prolipoprotein diacylglyceryl transferase (278 aa).

Helical transmembrane passes span Leu-17–Gly-37, Ala-57–Tyr-77, Ile-89–Ala-109, and Leu-119–Gly-139. An a 1,2-diacyl-sn-glycero-3-phospho-(1'-sn-glycerol)-binding site is contributed by Arg-140. 3 helical membrane-spanning segments follow: residues Gln-174–Ala-194, Gly-200–Phe-220, and Leu-233–Leu-253.

Belongs to the Lgt family.

The protein resides in the cell inner membrane. The enzyme catalyses L-cysteinyl-[prolipoprotein] + a 1,2-diacyl-sn-glycero-3-phospho-(1'-sn-glycerol) = an S-1,2-diacyl-sn-glyceryl-L-cysteinyl-[prolipoprotein] + sn-glycerol 1-phosphate + H(+). Its pathway is protein modification; lipoprotein biosynthesis (diacylglyceryl transfer). Catalyzes the transfer of the diacylglyceryl group from phosphatidylglycerol to the sulfhydryl group of the N-terminal cysteine of a prolipoprotein, the first step in the formation of mature lipoproteins. This Nitrosomonas europaea (strain ATCC 19718 / CIP 103999 / KCTC 2705 / NBRC 14298) protein is Phosphatidylglycerol--prolipoprotein diacylglyceryl transferase.